We begin with the raw amino-acid sequence, 364 residues long: Peptide chain release factor 1 (364 aa).

At Gln238 the chain carries N5-methylglutamine. A compositionally biased stretch (basic and acidic residues) spans 286–297 (DEKRQAEEDSTR). The interval 286 to 315 (DEKRQAEEDSTRRNLVGSGDRSERIRTYNY) is disordered.

The protein belongs to the prokaryotic/mitochondrial release factor family. Methylated by PrmC. Methylation increases the termination efficiency of RF1.

The protein localises to the cytoplasm. Its function is as follows. Peptide chain release factor 1 directs the termination of translation in response to the peptide chain termination codons UAG and UAA. The protein is Peptide chain release factor 1 of Idiomarina loihiensis (strain ATCC BAA-735 / DSM 15497 / L2-TR).